Consider the following 271-residue polypeptide: Putative pyruvate, phosphate dikinase regulatory protein (271 aa).

151 to 158 provides a ligand contact to ADP; it reads GISRTSKT.

It belongs to the pyruvate, phosphate/water dikinase regulatory protein family. PDRP subfamily.

It catalyses the reaction N(tele)-phospho-L-histidyl/L-threonyl-[pyruvate, phosphate dikinase] + ADP = N(tele)-phospho-L-histidyl/O-phospho-L-threonyl-[pyruvate, phosphate dikinase] + AMP + H(+). The enzyme catalyses N(tele)-phospho-L-histidyl/O-phospho-L-threonyl-[pyruvate, phosphate dikinase] + phosphate + H(+) = N(tele)-phospho-L-histidyl/L-threonyl-[pyruvate, phosphate dikinase] + diphosphate. In terms of biological role, bifunctional serine/threonine kinase and phosphorylase involved in the regulation of the pyruvate, phosphate dikinase (PPDK) by catalyzing its phosphorylation/dephosphorylation. This chain is Putative pyruvate, phosphate dikinase regulatory protein, found in Streptococcus uberis (strain ATCC BAA-854 / 0140J).